A 149-amino-acid chain; its full sequence is Large ribosomal subunit protein uL13 (149 aa).

It belongs to the universal ribosomal protein uL13 family. Part of the 50S ribosomal subunit.

Functionally, this protein is one of the early assembly proteins of the 50S ribosomal subunit, although it is not seen to bind rRNA by itself. It is important during the early stages of 50S assembly. In Gemmatimonas aurantiaca (strain DSM 14586 / JCM 11422 / NBRC 100505 / T-27), this protein is Large ribosomal subunit protein uL13.